The chain runs to 431 residues: Adenylosuccinate synthetase (431 aa).

GTP contacts are provided by residues 21–27 (GDEGKGK) and 49–51 (GHT). Asp-22 serves as the catalytic Proton acceptor. Positions 22 and 49 each coordinate Mg(2+). Residues 22 to 25 (DEGK), 47 to 50 (NAGH), Thr-138, Arg-152, Asn-230, Thr-245, and Arg-309 each bind IMP. The active-site Proton donor is the His-50. 305–311 (ATTGRPR) contributes to the substrate binding site. Residues Arg-311, 337–339 (KLD), and 419–421 (GNG) each bind GTP.

The protein belongs to the adenylosuccinate synthetase family. As to quaternary structure, homodimer. The cofactor is Mg(2+).

The protein localises to the cytoplasm. It carries out the reaction IMP + L-aspartate + GTP = N(6)-(1,2-dicarboxyethyl)-AMP + GDP + phosphate + 2 H(+). The protein operates within purine metabolism; AMP biosynthesis via de novo pathway; AMP from IMP: step 1/2. Functionally, plays an important role in the de novo pathway and in the salvage pathway of purine nucleotide biosynthesis. Catalyzes the first committed step in the biosynthesis of AMP from IMP. The sequence is that of Adenylosuccinate synthetase from Paramecium tetraurelia.